Consider the following 393-residue polypeptide: Putative competence-damage inducible protein (393 aa).

It belongs to the CinA family.

The sequence is that of Putative competence-damage inducible protein from Streptococcus suis (strain 98HAH33).